The chain runs to 165 residues: Cyclic pyranopterin monophosphate synthase (165 aa).

Residues 79–81 and 117–118 each bind substrate; these read LCH and ME. Residue aspartate 132 is part of the active site.

The protein belongs to the MoaC family. Homohexamer; trimer of dimers.

The catalysed reaction is (8S)-3',8-cyclo-7,8-dihydroguanosine 5'-triphosphate = cyclic pyranopterin phosphate + diphosphate. It participates in cofactor biosynthesis; molybdopterin biosynthesis. In terms of biological role, catalyzes the conversion of (8S)-3',8-cyclo-7,8-dihydroguanosine 5'-triphosphate to cyclic pyranopterin monophosphate (cPMP). This chain is Cyclic pyranopterin monophosphate synthase, found in Chloroflexus aggregans (strain MD-66 / DSM 9485).